The chain runs to 166 residues: Nicotine metabolites export pump subunit NepB (166 aa).

A run of 4 helical transmembrane segments spans residues 51–71 (LHAW…TVIL), 77–97 (FQLP…FFLL), 108–128 (VAYA…GAII), and 133–153 (VTLG…ILNL).

The protein belongs to the drug/metabolite transporter (DMT) superfamily. Small multidrug resistance (SMR) (TC 2.A.7.1) family. NepA/NepB subfamily. In terms of assembly, the efflux pump is composed of NepA and NepB.

It is found in the cell membrane. Component of an efflux pump responsible for the transport of nicotine breakdown products, in particular methylamine, out of the cell. This pump apparently serves as a metabolic valve for nicotine catabolites and may protect the bacteria from the potentially toxic side effects of these compounds. The chain is Nicotine metabolites export pump subunit NepB (nepB) from Paenarthrobacter nicotinovorans (Arthrobacter nicotinovorans).